The chain runs to 80 residues: Exodeoxyribonuclease 7 small subunit (80 aa).

Belongs to the XseB family. Heterooligomer composed of large and small subunits.

It localises to the cytoplasm. The enzyme catalyses Exonucleolytic cleavage in either 5'- to 3'- or 3'- to 5'-direction to yield nucleoside 5'-phosphates.. Its function is as follows. Bidirectionally degrades single-stranded DNA into large acid-insoluble oligonucleotides, which are then degraded further into small acid-soluble oligonucleotides. This Rickettsia akari (strain Hartford) protein is Exodeoxyribonuclease 7 small subunit.